The following is a 354-amino-acid chain: uncharacterized protein (354 aa).

This is an uncharacterized protein from Rickettsia prowazekii (strain Madrid E).